The following is an 844-amino-acid chain: MSTNLPNSCLVQIALTVSTHSGPQLIYHYPPSNYATATNSKKTHHPDIKKRYEYTDSENNSSSDDYSSGLSDSELSTDYADCSSDASESSLDSLPQSNHEDTVNSSTNNTFINNGLRSRQSQISANKLFQVLNQNNNNVAINGENSLRESLHSIRTSTNMSSTTDPRPEDELDAVDEELKILVDDLLDGSIFQQDTFQDISKVLNFNTEFVAELCSPRKEMCNTRFEFTVDDLCFLGLPIHADHKGRWKKSKKRKQASKRSARSSTARNSISRNSVGRNSIGRNRSKTESQGHINDVEEPADDENSDYEPSKSEMLNEMYCVPDAENDEFESLQQSINMFQVCFIMNPKIIEYNERVDDMYHYVVTRLSLILRYIQGKTGYVTRECVKIMKCKDEVSKHSRYYESLKSPWSKGKYMYERILYESSLARALTKCFNCIHNNEIANLEIDGDKIVSLQIPIKNEFSILPNLKEDAVLRGSFLSSILNESFIGRSTSLTNEDSDNLYANHDRLLDYGLLLLDEPENIIKGLENASFDNGVTDLLLINLVRQLKPTIRLGQYKLLIKELIDSNDSSYDDQFCETTLKSLCLHLIYWRHARLILPISSRNTYIVSPLAPISGFSTDDFKHGEYDTLIRQQEVPVNNNDEPSLIYQNKKVFNEKFPSLPSLPSFLQLMSTQKPRPFGHIIPSNEHKSMYLNALAWLMRYGYLTQLLTFVYVRVDKRIKIAVDEDLEKDNLRSNKHEKSGNFVTGGENYNSSEFDDLEMINDNDFTIILEPERNTALEKRWLYKCAEALPTDLQTLFRQVVKYFNGKVSLEYIMIKEGIPKNEIKRLLQALGKYIVEVKHW.

A signal peptide spans 1-21 (MSTNLPNSCLVQIALTVSTHS). Disordered stretches follow at residues 53-113 (EYTD…TFIN) and 246-310 (GRWK…DYEP). Positions 57–94 (SENNSSSDDYSSGLSDSELSTDYADCSSDASESSLDSL) are enriched in low complexity. Residues 103-113 (VNSSTNNTFIN) are compositionally biased toward polar residues. The span at 246–262 (GRWKKSKKRKQASKRSA) shows a compositional bias: basic residues. The segment covering 263–273 (RSSTARNSISR) has biased composition (low complexity). The segment covering 274–293 (NSVGRNSIGRNRSKTESQGH) has biased composition (polar residues). Positions 297 to 307 (VEEPADDENSD) are enriched in acidic residues.

This sequence belongs to the NPR3 family.

Its function is as follows. Mediates inactivation of the TORC1 complex in response to amino acid starvation. Required for meiotic nuclear division. The sequence is that of Nitrogen permease regulator 3 (NPR3) from Kluyveromyces lactis (strain ATCC 8585 / CBS 2359 / DSM 70799 / NBRC 1267 / NRRL Y-1140 / WM37) (Yeast).